We begin with the raw amino-acid sequence, 485 residues long: Glycogen synthase (485 aa).

K15 provides a ligand contact to ADP-alpha-D-glucose.

It belongs to the glycosyltransferase 1 family. Bacterial/plant glycogen synthase subfamily.

The catalysed reaction is [(1-&gt;4)-alpha-D-glucosyl](n) + ADP-alpha-D-glucose = [(1-&gt;4)-alpha-D-glucosyl](n+1) + ADP + H(+). The protein operates within glycan biosynthesis; glycogen biosynthesis. In terms of biological role, synthesizes alpha-1,4-glucan chains using ADP-glucose. In Thermosipho africanus (strain TCF52B), this protein is Glycogen synthase.